Reading from the N-terminus, the 417-residue chain is Gamma-glutamyl phosphate reductase (417 aa).

The protein belongs to the gamma-glutamyl phosphate reductase family.

It localises to the cytoplasm. It carries out the reaction L-glutamate 5-semialdehyde + phosphate + NADP(+) = L-glutamyl 5-phosphate + NADPH + H(+). Its pathway is amino-acid biosynthesis; L-proline biosynthesis; L-glutamate 5-semialdehyde from L-glutamate: step 2/2. In terms of biological role, catalyzes the NADPH-dependent reduction of L-glutamate 5-phosphate into L-glutamate 5-semialdehyde and phosphate. The product spontaneously undergoes cyclization to form 1-pyrroline-5-carboxylate. This is Gamma-glutamyl phosphate reductase from Phocaeicola vulgatus (strain ATCC 8482 / DSM 1447 / JCM 5826 / CCUG 4940 / NBRC 14291 / NCTC 11154) (Bacteroides vulgatus).